Reading from the N-terminus, the 773-residue chain is Kelch domain-containing protein 7A (773 aa).

The helical transmembrane segment at 23–40 (VVLSAAALLLVTAAYKLY) threads the bilayer. N-linked (GlcNAc...) asparagine glycosylation occurs at Asn-61. 2 disordered regions span residues 64-99 (EALG…LDYS) and 114-207 (SEEA…APNG). Ser-89 is subject to Phosphoserine. Residues 114-126 (SEEATRKGSDESQ) are compositionally biased toward basic and acidic residues. Asn-256 carries N-linked (GlcNAc...) asparagine glycosylation. The segment at 296 to 355 (KADSRPVPCPAALADAPSPGPGPEPLVTGAASRDEAANTAGGGASEAASPQPVASPSAPG) is disordered. 5 Kelch repeats span residues 323–370 (TGAA…ENPE), 488–534 (KRLV…LCTL), 537–585 (YLFV…ALEG), 586–628 (HLYA…ATVC), and 631–673 (EIFV…AVNG). The segment covering 340–354 (SEAASPQPVASPSAP) has biased composition (low complexity). A Phosphoserine modification is found at Ser-361.

It is found in the membrane. This is Kelch domain-containing protein 7A (Klhdc7a) from Mus musculus (Mouse).